Here is a 1198-residue protein sequence, read N- to C-terminus: DNA polymerase (1198 aa).

Disordered stretches follow at residues 1–90 (MALV…TVVA), 179–198 (LEQP…QPNP), and 906–931 (ALAD…PSGT). The segment covering 30-40 (QQPPRAAPAPA) has biased composition (low complexity).

The protein belongs to the DNA polymerase type-B family. As to quaternary structure, heterodimer with the terminal protein; this heterodimer binds to bp 9 to 18 of the genome. Forms a complex with viral pTP, DBP and hosts NFIA and POU2F1/OCT1 for initiation of replication.

The protein resides in the host nucleus. The enzyme catalyses DNA(n) + a 2'-deoxyribonucleoside 5'-triphosphate = DNA(n+1) + diphosphate. Its function is as follows. Eukaryotic-type DNA polymerase involved in viral genomic replication. DNA synthesis is protein primed, and acts in a strand displacement replication. Assembles in complex with viral pTP, DBP, host NFIA and host POU2F1/OCT1 on viral origin of replication. The polymerase covalently transfers dCMP onto pTP, thereby initiating complementary strand synthesis. The protein is DNA polymerase of Homo sapiens (Human).